The chain runs to 576 residues: Vesicular glutamate transporter 1 (576 aa).

Topologically, residues 1-63 (MEFRKEEFKK…CTCFGLPRRY (63 aa)) are cytoplasmic. A helical membrane pass occupies residues 64-84 (IIAIMSGLGFCISFGIRCNLG). The Vesicular portion of the chain corresponds to 85–116 (VAIVSMVNNNTVYKGNKIVIEQAQFTWDPETV). N93 carries an N-linked (GlcNAc...) asparagine glycan. A helical membrane pass occupies residues 117 to 137 (GMIHGSFFWGYIVTQIPGGYI). Topologically, residues 138–140 (CQK) are cytoplasmic. A helical transmembrane segment spans residues 141-161 (FAANRVFGFAIVATSTLNMLI). The Vesicular segment spans residues 162–168 (PSAARVH). Residues 169 to 189 (FACVICVRILQGLVEGVTYPA) traverse the membrane as a helical segment. Over 190–208 (CHGIWSKWAPPLERSRLAT) the chain is Cytoplasmic. The helical transmembrane segment at 209-229 (TAFCGSYAGAVVAMPLAGVLV) threads the bilayer. The Vesicular portion of the chain corresponds to 230-236 (QYSGWSS). The chain crosses the membrane as a helical span at residues 237–257 (VFYVYGSFGIMWYMFWILVSY). The Cytoplasmic portion of the chain corresponds to 258–302 (ESPAIHPTISEEEKKYIEESIGESTGLMNPMAKFKAPWRKFFTSM). Residues 303 to 323 (PVYAIIVANFCRSWTFYLLLI) traverse the membrane as a helical segment. Over 324–341 (SQPAYFEEVFGFEISKVG) the chain is Vesicular. A helical membrane pass occupies residues 342–362 (LLSALPHLVMTIIVPIGGQIA). At 363-378 (DFLRTKRIMSTTNVRK) the chain is on the cytoplasmic side. Residues 379–399 (MMNCGGFGMEATLLLVVGYSH) traverse the membrane as a helical segment. Residues 400–401 (SR) are Vesicular-facing. Residues 402 to 422 (GVAISFLVLAVGFSGFAISGF) form a helical membrane-spanning segment. Topologically, residues 423–435 (NVNHLDIAPRYAS) are cytoplasmic. A helical transmembrane segment spans residues 436-456 (ILMGISNGVGTLSGMVCPLIV). Residues 457–469 (GAMTKHKTREEWQ) are Vesicular-facing. A helical transmembrane segment spans residues 470 to 490 (YVFLIASLVHYGGVLFYGIFA). At 491 to 576 (SGEKQPWAEP…YGTVAERDLS (86 aa)) the chain is on the cytoplasmic side. The tract at residues 517–547 (ADESEEQSQAYGAYGSYGATQTTSQQNGGWT) is disordered. Positions 534-545 (GATQTTSQQNGG) are enriched in polar residues.

This sequence belongs to the major facilitator superfamily. Sodium/anion cotransporter family. VGLUT subfamily.

The protein localises to the cytoplasmic vesicle. It is found in the secretory vesicle. Its subcellular location is the synaptic vesicle membrane. It localises to the cell membrane. The protein resides in the synapse. The protein localises to the synaptosome. The catalysed reaction is L-glutamate(out) = L-glutamate(in). It catalyses the reaction chloride(in) = chloride(out). The enzyme catalyses 3 Na(+)(out) + phosphate(out) = 3 Na(+)(in) + phosphate(in). It carries out the reaction phosphate(in) = phosphate(out). The catalysed reaction is K(+)(in) + H(+)(out) = K(+)(out) + H(+)(in). Chloride channel activity is allosterically activated by lumenal H(+) and Cl(-) leading to synaptic vesicles acidification. The L-glutamate transport activity is allosterically activated by lumenal H(+) and Cl(-). The allosteric activation by H(+) efficiently prevents non-vesicular efflux across the plasma membrane, thereby restricting L-glutamate transport activity to acidic membranes such as synaptic vesicles. In terms of biological role, multifunctional transporter that transports L-glutamate as well as multiple ions such as chloride, proton, potassium, sodium and phosphate. At the synaptic vesicle membrane, mainly functions as an uniporter which transports preferentially L-glutamate but also phosphate from the cytoplasm into synaptic vesicles at presynaptic nerve terminals of excitatory neural cells. The L-glutamate or phosphate uniporter activity is electrogenic and is driven by the proton electrochemical gradient, mainly by the electrical gradient established by the vacuolar H(+)-ATPase across the synaptic vesicle membrane. In addition, functions as a chloride channel that allows a chloride permeation through the synaptic vesicle membrane that affects the proton electrochemical gradient and promotes synaptic vesicles acidification. Moreover, may function as a K(+)/H(+) antiport allowing to maintain the electrical gradient and to decrease chemical gradient and therefore sustain vesicular glutamate uptake. The vesicular K(+)/H(+) antiport activity is electroneutral. At the plasma membrane, following exocytosis, functions as a symporter of Na(+) and phosphate from the extracellular space to the cytoplasm allowing synaptic phosphate homeostasis regulation. The symporter activity is driven by an inside negative membrane potential and is electrogenic. Is necessary for synaptic signaling of visual-evoked responses from photoreceptors. In Xenopus tropicalis (Western clawed frog), this protein is Vesicular glutamate transporter 1.